Reading from the N-terminus, the 684-residue chain is Ski-like protein (684 aa).

Glycyl lysine isopeptide (Lys-Gly) (interchain with G-Cter in SUMO2) cross-links involve residues Lys-50 and Lys-70. The tract at residues 420–454 is disordered; it reads SQSKELTKTEASKSISRQSEKAHSSGKLQKTVSYP. Position 452 is a phosphoserine (Ser-452). Glycyl lysine isopeptide (Lys-Gly) (interchain with G-Cter in SUMO2) cross-links involve residues Lys-489 and Lys-527. Positions 536–684 form a coiled coil; it reads RTYLKQQEKL…ILKSSKTAKE (149 aa).

It belongs to the SKI family. Interacts with CPNE4 (via VWFA domain). Interacts with SMAD2, SMAD3 and RNF111. Isoform 1 interacts with WWP1. Ubiquitinated by RNF111 and ARK2C, promoting proteasomal degradation, leading to enhance the BMP-Smad signaling. In terms of tissue distribution, isoform SNON and isoform SNOA are widely expressed. Highest expression is found in skeletal muscle, followed by placenta and lung. Lowest expression in heart, brain and pancreas. Isoform SNOI expression is restricted to skeletal muscle.

Its function is as follows. May have regulatory role in cell division or differentiation in response to extracellular signals. This Homo sapiens (Human) protein is Ski-like protein (SKIL).